The chain runs to 211 residues: Protein-methionine-sulfoxide reductase heme-binding subunit MsrQ (211 aa).

Helical transmembrane passes span 17 to 37 (LAGLLPFLWLVWAINHGGLGA), 82 to 102 (LWCFAWATLHLTSYALLELGV), 116 to 136 (PYLTLGIISWVILLALAFTST), and 153 to 173 (FVYLVAILAPIHYLWSVKIIS).

This sequence belongs to the MsrQ family. Heterodimer of a catalytic subunit (MsrP) and a heme-binding subunit (MsrQ). FMN serves as cofactor. Requires heme b as cofactor.

Its subcellular location is the cell inner membrane. Its function is as follows. Part of the MsrPQ system that repairs oxidized periplasmic proteins containing methionine sulfoxide residues (Met-O), using respiratory chain electrons. Thus protects these proteins from oxidative-stress damage caused by reactive species of oxygen and chlorine generated by the host defense mechanisms. MsrPQ is essential for the maintenance of envelope integrity under bleach stress, rescuing a wide series of structurally unrelated periplasmic proteins from methionine oxidation, including the primary periplasmic chaperone SurA and the lipoprotein Pal. MsrQ provides electrons for reduction to the reductase catalytic subunit MsrP, using the quinone pool of the respiratory chain. The polypeptide is Protein-methionine-sulfoxide reductase heme-binding subunit MsrQ (Shigella boydii serotype 18 (strain CDC 3083-94 / BS512)).